We begin with the raw amino-acid sequence, 153 residues long: Sec-independent protein translocase protein TatB (153 aa).

A helical membrane pass occupies residues 1 to 21 (MFGISFSELLLVGLVALLVLG). Residues 78-153 (MFAQNQHPET…HDSSLPPRAP (76 aa)) are disordered.

This sequence belongs to the TatB family. The Tat system comprises two distinct complexes: a TatABC complex, containing multiple copies of TatA, TatB and TatC subunits, and a separate TatA complex, containing only TatA subunits. Substrates initially bind to the TatABC complex, which probably triggers association of the separate TatA complex to form the active translocon.

The protein resides in the cell inner membrane. In terms of biological role, part of the twin-arginine translocation (Tat) system that transports large folded proteins containing a characteristic twin-arginine motif in their signal peptide across membranes. Together with TatC, TatB is part of a receptor directly interacting with Tat signal peptides. TatB may form an oligomeric binding site that transiently accommodates folded Tat precursor proteins before their translocation. This Pseudomonas savastanoi pv. phaseolicola (strain 1448A / Race 6) (Pseudomonas syringae pv. phaseolicola (strain 1448A / Race 6)) protein is Sec-independent protein translocase protein TatB.